Reading from the N-terminus, the 109-residue chain is Putative double-stranded DNA mimic protein KPK_2119 (109 aa).

This sequence belongs to the putative dsDNA mimic protein family.

In terms of biological role, may act as a double-stranded DNA (dsDNA) mimic. Probably regulates the activity of a dsDNA-binding protein. The polypeptide is Putative double-stranded DNA mimic protein KPK_2119 (Klebsiella pneumoniae (strain 342)).